Here is a 360-residue protein sequence, read N- to C-terminus: Dual-specificity RNA methyltransferase RlmN (360 aa).

Glu-89 acts as the Proton acceptor in catalysis. The 236-residue stretch at 95-330 folds into the Radical SAM core domain; it reads DSGRGTLCVS…TRVTRGQDID (236 aa). Cys-102 and Cys-333 are disulfide-bonded. [4Fe-4S] cluster contacts are provided by Cys-109, Cys-113, and Cys-116. Residues 159–160, Ser-191, 213–215, and Asn-290 contribute to the S-adenosyl-L-methionine site; these read GE and SLH. The active-site S-methylcysteine intermediate is the Cys-333.

Belongs to the radical SAM superfamily. RlmN family. It depends on [4Fe-4S] cluster as a cofactor.

Its subcellular location is the cytoplasm. The catalysed reaction is adenosine(2503) in 23S rRNA + 2 reduced [2Fe-2S]-[ferredoxin] + 2 S-adenosyl-L-methionine = 2-methyladenosine(2503) in 23S rRNA + 5'-deoxyadenosine + L-methionine + 2 oxidized [2Fe-2S]-[ferredoxin] + S-adenosyl-L-homocysteine. It carries out the reaction adenosine(37) in tRNA + 2 reduced [2Fe-2S]-[ferredoxin] + 2 S-adenosyl-L-methionine = 2-methyladenosine(37) in tRNA + 5'-deoxyadenosine + L-methionine + 2 oxidized [2Fe-2S]-[ferredoxin] + S-adenosyl-L-homocysteine. Its function is as follows. Specifically methylates position 2 of adenine 2503 in 23S rRNA and position 2 of adenine 37 in tRNAs. m2A2503 modification seems to play a crucial role in the proofreading step occurring at the peptidyl transferase center and thus would serve to optimize ribosomal fidelity. This chain is Dual-specificity RNA methyltransferase RlmN, found in Alkalilimnicola ehrlichii (strain ATCC BAA-1101 / DSM 17681 / MLHE-1).